Reading from the N-terminus, the 624-residue chain is Chaperone protein HtpG (624 aa).

Residues 1-336 form an a; substrate-binding region; it reads MKGQETRGFQ…SNDLPLNVSR (336 aa). A b region spans residues 337 to 552; the sequence is EILQDSTVTR…ADEMSTQMAK (216 aa). Residues 553–624 form a c region; the sequence is LFAAAGQSVP…IRRMNQLLVS (72 aa).

It belongs to the heat shock protein 90 family. In terms of assembly, homodimer. In terms of processing, UMPylated on a histidine residue by YdiU under ATP-limited conditions.

The protein resides in the cytoplasm. Its activity is regulated as follows. UMPylation of the chaperone by YdiU negatively regulates its activity, facilitating Salmonella survival under ATP-limited conditions. Molecular chaperone. Has ATPase activity. This chain is Chaperone protein HtpG, found in Salmonella typhimurium (strain LT2 / SGSC1412 / ATCC 700720).